The sequence spans 142 residues: MVLSPADKTNVKSTWDKLGGHAGEYGGEALERTFASFPTTKTYFPHFDLSPGSAQVKAHGKKVADALTLAVGHLDDLPGALSALSDLHAHKLRVDPVNFKLLSHCLLVTLACHHPAEFTPAVHASLDKFFSAVSTVLTSKYR.

The region spanning 2 to 142 is the Globin domain; the sequence is VLSPADKTNV…VSTVLTSKYR (141 aa). The residue at position 4 (Ser-4) is a Phosphoserine. N6-succinyllysine is present on Lys-8. Thr-9 is modified (phosphothreonine). The residue at position 12 (Lys-12) is an N6-succinyllysine. Lys-17 is subject to N6-acetyllysine; alternate. Lys-17 is modified (N6-succinyllysine; alternate). Tyr-25 carries the phosphotyrosine modification. Ser-36 carries the post-translational modification Phosphoserine. Lys-41 carries the N6-succinyllysine modification. The residue at position 50 (Ser-50) is a Phosphoserine. Position 59 (His-59) interacts with O2. His-88 contributes to the heme b binding site. A Phosphoserine modification is found at Ser-103. At Thr-109 the chain carries Phosphothreonine. A Phosphoserine modification is found at Ser-125. 2 positions are modified to phosphothreonine: Thr-135 and Thr-138. Position 139 is a phosphoserine (Ser-139).

This sequence belongs to the globin family. Heterotetramer of two alpha chains and two beta chains. As to expression, red blood cells.

In terms of biological role, involved in oxygen transport from the lung to the various peripheral tissues. Its function is as follows. Hemopressin acts as an antagonist peptide of the cannabinoid receptor CNR1. Hemopressin-binding efficiently blocks cannabinoid receptor CNR1 and subsequent signaling. The sequence is that of Hemoglobin subunit alpha (HBA) from Ailurus fulgens (Himalayan red panda).